The following is a 441-amino-acid chain: FBD-associated F-box protein At5g18780 (441 aa).

Positions 10–56 (EDRISILPEPLLCHILSFLRTKDSVRTSVLSSRWRDLWLWVPRLDLD) constitute an F-box domain. The 45-residue stretch at 366–410 (LPRCLISSLASVDIESPITDKATELKLVSYLLENSTTLKKLVLRL) folds into the FBD domain.

The chain is FBD-associated F-box protein At5g18780 from Arabidopsis thaliana (Mouse-ear cress).